Consider the following 136-residue polypeptide: ATP synthase epsilon chain (136 aa).

Belongs to the ATPase epsilon chain family. In terms of assembly, F-type ATPases have 2 components, CF(1) - the catalytic core - and CF(0) - the membrane proton channel. CF(1) has five subunits: alpha(3), beta(3), gamma(1), delta(1), epsilon(1). CF(0) has three main subunits: a, b and c.

It localises to the cellular thylakoid membrane. Functionally, produces ATP from ADP in the presence of a proton gradient across the membrane. The polypeptide is ATP synthase epsilon chain (atpC) (Prochloron didemni).